The following is a 354-amino-acid chain: Protein RecA (354 aa).

65-72 (GPESSGKT) contacts ATP.

This sequence belongs to the RecA family.

It is found in the cytoplasm. Its function is as follows. Can catalyze the hydrolysis of ATP in the presence of single-stranded DNA, the ATP-dependent uptake of single-stranded DNA by duplex DNA, and the ATP-dependent hybridization of homologous single-stranded DNAs. It interacts with LexA causing its activation and leading to its autocatalytic cleavage. The chain is Protein RecA from Aeromonas hydrophila subsp. hydrophila (strain ATCC 7966 / DSM 30187 / BCRC 13018 / CCUG 14551 / JCM 1027 / KCTC 2358 / NCIMB 9240 / NCTC 8049).